The following is a 1083-amino-acid chain: uncharacterized protein (1083 aa).

The disordered stretch occupies residues 93 to 145; the sequence is SKGNLRYVPTTSRNPSNTDTYSSSIDISSSSSSINTSDDSSGKTSSNDLSDMS. Positions 108–145 are enriched in low complexity; it reads SNTDTYSSSIDISSSSSSINTSDDSSGKTSSNDLSDMS.

The protein localises to the virion. This is an uncharacterized protein from Acanthamoeba polyphaga (Amoeba).